The following is a 400-amino-acid chain: Coenzyme A biosynthesis bifunctional protein CoaBC (400 aa).

The interval 1–190 (MKLNGKHIVV…SQKQDLQGLN (190 aa)) is phosphopantothenoylcysteine decarboxylase. Residue C158 is the Proton donor of the active site. Residues 191-400 (VSITAGPTRE…EIIERYQKTL (210 aa)) are phosphopantothenate--cysteine ligase. CTP-binding positions include 273–275 (GCA), D279, K289, 305–308 (PDII), F324, K338, and K342.

It in the N-terminal section; belongs to the HFCD (homo-oligomeric flavin containing Cys decarboxylase) superfamily. This sequence in the C-terminal section; belongs to the PPC synthetase family. Mg(2+) is required as a cofactor. Requires FMN as cofactor.

It catalyses the reaction N-[(R)-4-phosphopantothenoyl]-L-cysteine + H(+) = (R)-4'-phosphopantetheine + CO2. It carries out the reaction (R)-4'-phosphopantothenate + L-cysteine + CTP = N-[(R)-4-phosphopantothenoyl]-L-cysteine + CMP + diphosphate + H(+). It functions in the pathway cofactor biosynthesis; coenzyme A biosynthesis; CoA from (R)-pantothenate: step 2/5. Its pathway is cofactor biosynthesis; coenzyme A biosynthesis; CoA from (R)-pantothenate: step 3/5. Functionally, catalyzes two sequential steps in the biosynthesis of coenzyme A. In the first step cysteine is conjugated to 4'-phosphopantothenate to form 4-phosphopantothenoylcysteine. In the second step the latter compound is decarboxylated to form 4'-phosphopantotheine. The protein is Coenzyme A biosynthesis bifunctional protein CoaBC of Haemophilus influenzae (strain ATCC 51907 / DSM 11121 / KW20 / Rd).